A 203-amino-acid chain; its full sequence is Na(+)-translocating NADH-quinone reductase subunit E (203 aa).

The next 6 membrane-spanning stretches (helical) occupy residues 11-31, 35-55, 82-102, 115-135, 145-165, and 181-201; these read SIFI…FLAV, ISTA…TVPL, FLGL…LEMF, GIFL…LFMV, MVYG…MAGV, and LGIT…FSGI.

It belongs to the NqrDE/RnfAE family. Composed of six subunits; NqrA, NqrB, NqrC, NqrD, NqrE and NqrF.

It localises to the cell inner membrane. It carries out the reaction a ubiquinone + n Na(+)(in) + NADH + H(+) = a ubiquinol + n Na(+)(out) + NAD(+). Functionally, NQR complex catalyzes the reduction of ubiquinone-1 to ubiquinol by two successive reactions, coupled with the transport of Na(+) ions from the cytoplasm to the periplasm. NqrA to NqrE are probably involved in the second step, the conversion of ubisemiquinone to ubiquinol. In Dichelobacter nodosus (strain VCS1703A), this protein is Na(+)-translocating NADH-quinone reductase subunit E.